Reading from the N-terminus, the 256-residue chain is 5-oxoprolinase subunit A 3 (256 aa).

The protein belongs to the LamB/PxpA family. As to quaternary structure, forms a complex composed of PxpA, PxpB and PxpC.

The catalysed reaction is 5-oxo-L-proline + ATP + 2 H2O = L-glutamate + ADP + phosphate + H(+). Functionally, catalyzes the cleavage of 5-oxoproline to form L-glutamate coupled to the hydrolysis of ATP to ADP and inorganic phosphate. This is 5-oxoprolinase subunit A 3 from Pseudomonas syringae pv. tomato (strain ATCC BAA-871 / DC3000).